A 173-amino-acid polypeptide reads, in one-letter code: T-cell receptor beta-2 chain C region (173 aa).

The interval 1–146 (EDLRNVTPPK…GVLSATILYE (146 aa)) is c region. N-linked (GlcNAc...) asparagine glycans are attached at residues Asn67 and Asn116. Residues 147–168 (ILLGKATLYAVLVSGLVLMAMV) traverse the membrane as a helical segment. The Cytoplasmic segment spans residues 169–173 (KKKNS).

It is found in the membrane. This chain is T-cell receptor beta-2 chain C region, found in Mus musculus (Mouse).